Consider the following 314-residue polypeptide: R2-like ligand binding oxidase (314 aa).

3 residues coordinate Mn(2+): Glu68, Glu101, and His104. The segment at residues 71 to 162 is a cross-link (3-(O4'-tyrosyl)-valine (Val-Tyr)); it reads VTEDIQPFMS…AAQVRASVTY (92 aa). Fe cation is bound at residue Glu101. Fe cation is bound by residues Glu167, Glu202, and His205.

Belongs to the ribonucleoside diphosphate reductase small chain family. R2-like ligand binding oxidase subfamily. Homodimer. Requires Fe cation as cofactor. The cofactor is Mn(2+).

Functionally, probable oxidase that might be involved in lipid metabolism. The polypeptide is R2-like ligand binding oxidase (Mycobacterium tuberculosis (strain ATCC 25177 / H37Ra)).